The following is a 194-amino-acid chain: Large ribosomal subunit protein uL6x (194 aa).

At threonine 75 the chain carries Phosphothreonine.

It belongs to the universal ribosomal protein uL6 family.

This chain is Large ribosomal subunit protein uL6x (RPL9D), found in Arabidopsis thaliana (Mouse-ear cress).